A 324-amino-acid chain; its full sequence is Uroporphyrinogen decarboxylase (324 aa).

Substrate is bound by residues arginine 14–arginine 18, phenylalanine 32, aspartate 63, tyrosine 136, serine 191, and histidine 302.

This sequence belongs to the uroporphyrinogen decarboxylase family. In terms of assembly, homodimer.

Its subcellular location is the cytoplasm. It catalyses the reaction uroporphyrinogen III + 4 H(+) = coproporphyrinogen III + 4 CO2. The protein operates within porphyrin-containing compound metabolism; protoporphyrin-IX biosynthesis; coproporphyrinogen-III from 5-aminolevulinate: step 4/4. Its function is as follows. Catalyzes the decarboxylation of four acetate groups of uroporphyrinogen-III to yield coproporphyrinogen-III. This chain is Uroporphyrinogen decarboxylase, found in Neorickettsia sennetsu (strain ATCC VR-367 / Miyayama) (Ehrlichia sennetsu).